Reading from the N-terminus, the 39-residue chain is Contryphan-Cal4 (39 aa).

An N-terminal signal peptide occupies residues 1–20 (MTRTAVLLLTLLFLVAMAAS). Cysteine 29 and cysteine 35 are disulfide-bonded.

Expressed by the venom duct.

Its subcellular location is the secreted. Its function is as follows. Probable neurotoxin. This is Contryphan-Cal4 from Californiconus californicus (California cone).